A 596-amino-acid chain; its full sequence is ATP-dependent lipid A-core flippase (596 aa).

6 helical membrane-spanning segments follow: residues V34–I54, A80–L100, A138–V158, V164–I184, Q263–V283, and V292–L312. Residues V38–R321 enclose the ABC transmembrane type-1 domain. The ABC transporter domain maps to I353–I589. G389–T396 provides a ligand contact to ATP.

This sequence belongs to the ABC transporter superfamily. Lipid exporter (TC 3.A.1.106) family. As to quaternary structure, homodimer.

The protein localises to the cell inner membrane. It catalyses the reaction ATP + H2O + lipid A-core oligosaccharideSide 1 = ADP + phosphate + lipid A-core oligosaccharideSide 2.. Involved in lipopolysaccharide (LPS) biosynthesis. Translocates lipid A-core from the inner to the outer leaflet of the inner membrane. Transmembrane domains (TMD) form a pore in the inner membrane and the ATP-binding domain (NBD) is responsible for energy generation. This chain is ATP-dependent lipid A-core flippase, found in Burkholderia thailandensis (strain ATCC 700388 / DSM 13276 / CCUG 48851 / CIP 106301 / E264).